Here is a 74-residue protein sequence, read N- to C-terminus: Putative defensin-like protein 186 (74 aa).

Residues 1-22 form the signal peptide; it reads MKNSSIILVLVFFFFISSSGEA. Intrachain disulfides connect cysteine 25/cysteine 74, cysteine 31/cysteine 51, cysteine 37/cysteine 68, and cysteine 41/cysteine 70.

This sequence belongs to the DEFL family.

It is found in the secreted. The chain is Putative defensin-like protein 186 (LCR40) from Arabidopsis thaliana (Mouse-ear cress).